The following is a 172-amino-acid chain: Ribosome maturation factor RimM (172 aa).

The PRC barrel domain maps to 97–170; the sequence is ENEFYFHEII…KITIEVMEGL (74 aa).

It belongs to the RimM family. Binds ribosomal protein uS19.

The protein localises to the cytoplasm. An accessory protein needed during the final step in the assembly of 30S ribosomal subunit, possibly for assembly of the head region. Essential for efficient processing of 16S rRNA. May be needed both before and after RbfA during the maturation of 16S rRNA. It has affinity for free ribosomal 30S subunits but not for 70S ribosomes. The sequence is that of Ribosome maturation factor RimM from Listeria monocytogenes serovar 1/2a (strain ATCC BAA-679 / EGD-e).